We begin with the raw amino-acid sequence, 237 residues long: Ribonuclease PH (237 aa).

Phosphate is bound by residues R86 and 124–126 (GTR).

It belongs to the RNase PH family. In terms of assembly, homohexameric ring arranged as a trimer of dimers.

It carries out the reaction tRNA(n+1) + phosphate = tRNA(n) + a ribonucleoside 5'-diphosphate. Functionally, phosphorolytic 3'-5' exoribonuclease that plays an important role in tRNA 3'-end maturation. Removes nucleotide residues following the 3'-CCA terminus of tRNAs; can also add nucleotides to the ends of RNA molecules by using nucleoside diphosphates as substrates, but this may not be physiologically important. Probably plays a role in initiation of 16S rRNA degradation (leading to ribosome degradation) during starvation. The chain is Ribonuclease PH from Shewanella denitrificans (strain OS217 / ATCC BAA-1090 / DSM 15013).